A 727-amino-acid polypeptide reads, in one-letter code: Bromodomain-containing protein C631.02 (727 aa).

Disordered regions lie at residues 27–231 (AATI…PPMT) and 341–369 (TSYS…AAMY). Positions 56–68 (ENDDGTLDLFGDS) are enriched in acidic residues. The segment covering 69 to 78 (ELEKEQKGDN) has biased composition (basic and acidic residues). Positions 102-114 (PSSPTHPSVSNIT) are enriched in polar residues. The segment covering 128–150 (EEEKSSESLDSHTHPPKRVRNED) has biased composition (basic and acidic residues). Residues 153 to 177 (LTFSKTSPVSPSSLKDGASNTVTND) are compositionally biased toward polar residues. A Phosphoserine modification is found at S162. Residues 206-231 (SKEHSSPHDETVKKEENDKDQYPPMT) show a composition bias toward basic and acidic residues. The 107-residue stretch at 229 to 335 (PMTKEQHKYI…ATFERQLKQL (107 aa)) folds into the Bromo 1 domain. In terms of domain architecture, Bromo 2 spans 388–497 (RKDAAEMKFC…SIFQKLWANK (110 aa)). In terms of domain architecture, NET spans 570–650 (RSLSVDIYPP…KGDEIGAEAL (81 aa)). The interval 699-727 (IAAYNTKSLGSDDSSSEDDGESSESSDSA) is disordered. Over residues 712–727 (SSSEDDGESSESSDSA) the composition is skewed to acidic residues.

Belongs to the BET family.

It localises to the nucleus. The polypeptide is Bromodomain-containing protein C631.02 (Schizosaccharomyces pombe (strain 972 / ATCC 24843) (Fission yeast)).